A 197-amino-acid polypeptide reads, in one-letter code: Imidazoleglycerol-phosphate dehydratase (197 aa).

This sequence belongs to the imidazoleglycerol-phosphate dehydratase family.

It is found in the cytoplasm. The catalysed reaction is D-erythro-1-(imidazol-4-yl)glycerol 3-phosphate = 3-(imidazol-4-yl)-2-oxopropyl phosphate + H2O. Its pathway is amino-acid biosynthesis; L-histidine biosynthesis; L-histidine from 5-phospho-alpha-D-ribose 1-diphosphate: step 6/9. This Rhodopseudomonas palustris (strain BisA53) protein is Imidazoleglycerol-phosphate dehydratase.